We begin with the raw amino-acid sequence, 568 residues long: N66 matrix protein (568 aa).

The N-terminal stretch at 1 to 22 (MWRMTTLLHLTALLVLIPLCHC) is a signal peptide. Residues 55-567 (AGFSYNRDIC…KHPLRVYKNS (513 aa)) form the Alpha-carbonic anhydrase domain. Positions 154, 156, and 179 each coordinate Zn(2+). A disordered region spans residues 259 to 421 (NGNNGNNGNG…NGYNGDNGNS (163 aa)). Residues 280-290 (GNNGNGNGNNG) are compositionally biased toward gly residues. Over residues 291 to 318 (YNGNNGYNGNNGNNGNGNNDNNGNDNNG) the composition is skewed to low complexity. Gly residues-rich tracts occupy residues 319 to 352 (NNGG…GNNG) and 362 to 380 (NGNG…GNNG). A glycan (N-linked (GlcNAc...) asparagine) is linked at N389. Gly residues predominate over residues 390–413 (GSNGNNGGNGNNGNNGDNGNGDNG). 506-507 (TT) contributes to the substrate binding site. N511 is a glycosylation site (N-linked (GlcNAc...) asparagine).

The protein belongs to the alpha-carbonic anhydrase family. In terms of assembly, homooligomer; disulfide-linked. May also be disulfide-linked to insoluble organic matrix. It depends on Zn(2+) as a cofactor. As to expression, expressed in both the dorsal region of the mantle and the mantle edge. Is dispersed in calcium carbonate and also linked by disulfide bonds to the organic core of nacre.

It is found in the secreted. The protein localises to the extracellular space. The protein resides in the extracellular matrix. It catalyses the reaction hydrogencarbonate + H(+) = CO2 + H2O. Functionally, acts as a negative regulator for calcification in the shells of mollusks. May function both as a calcium concentrator and as a carbonic anhydrase required for production of carbonate ions, which are assembled to CaCO(3) at mineralization sites. Is important for shell formation in both the calcitic prismatic layer and the aragonitic nacreous layer. The sequence is that of N66 matrix protein from Pinctada maxima (Silver-lipped pearl oyster).